The following is a 464-amino-acid chain: Fumarate hydratase class II (464 aa).

Substrate contacts are provided by residues 98-100 (SGT), arginine 126, 129-132 (HPND), 139-141 (SSN), and threonine 187. The active-site Proton donor/acceptor is the histidine 188. Residue serine 318 is part of the active site. Substrate-binding positions include serine 319 and 324–326 (KVN).

Belongs to the class-II fumarase/aspartase family. Fumarase subfamily. As to quaternary structure, homotetramer.

It localises to the cytoplasm. The enzyme catalyses (S)-malate = fumarate + H2O. Its pathway is carbohydrate metabolism; tricarboxylic acid cycle; (S)-malate from fumarate: step 1/1. Its function is as follows. Involved in the TCA cycle. Catalyzes the stereospecific interconversion of fumarate to L-malate. The chain is Fumarate hydratase class II from Photorhabdus laumondii subsp. laumondii (strain DSM 15139 / CIP 105565 / TT01) (Photorhabdus luminescens subsp. laumondii).